The primary structure comprises 234 residues: Probable transcriptional regulatory protein Psyr_3028 (234 aa).

This sequence belongs to the TACO1 family.

It is found in the cytoplasm. This Pseudomonas syringae pv. syringae (strain B728a) protein is Probable transcriptional regulatory protein Psyr_3028.